The sequence spans 479 residues: Ribosomal RNA small subunit methyltransferase F (479 aa).

Residues Ala125–Lys131, Glu149, Asp176, and Asp194 each bind S-adenosyl-L-methionine. The active-site Nucleophile is the Cys247.

Belongs to the class I-like SAM-binding methyltransferase superfamily. RsmB/NOP family.

The protein resides in the cytoplasm. The catalysed reaction is cytidine(1407) in 16S rRNA + S-adenosyl-L-methionine = 5-methylcytidine(1407) in 16S rRNA + S-adenosyl-L-homocysteine + H(+). Specifically methylates the cytosine at position 1407 (m5C1407) of 16S rRNA. The chain is Ribosomal RNA small subunit methyltransferase F from Citrobacter koseri (strain ATCC BAA-895 / CDC 4225-83 / SGSC4696).